A 399-amino-acid chain; its full sequence is A-type ATP synthase subunit C (399 aa).

This sequence belongs to the V-ATPase V0D/AC39 subunit family. The A-type ATPase is composed of subunits A(3), B(3), C, D, E(1 or 2), F, H(2), I and K(x).

The protein resides in the cell membrane. In terms of biological role, component of the A-type ATP synthase that produces ATP from ADP in the presence of a proton gradient across the membrane. This chain is A-type ATP synthase subunit C, found in Methanocaldococcus jannaschii (strain ATCC 43067 / DSM 2661 / JAL-1 / JCM 10045 / NBRC 100440) (Methanococcus jannaschii).